The primary structure comprises 143 residues: MALERTLSIIKPDAVAKNLIGAIYNRFESAGLRIVGAKMMHLSKEQAEGFYAEHKERPFFGALVEFMTSGPIVVQVLEGEDAVRKNRDIMGATNPAEALAGTIRADYAETIDENAVHGSDATESAAREISYFFSDEEVCQRTR.

ATP is bound by residues Lys11, Phe59, Arg87, Thr93, Arg104, and Asn114. The active-site Pros-phosphohistidine intermediate is His117.

Belongs to the NDK family. Homotetramer. Mg(2+) is required as a cofactor.

It is found in the cytoplasm. The catalysed reaction is a 2'-deoxyribonucleoside 5'-diphosphate + ATP = a 2'-deoxyribonucleoside 5'-triphosphate + ADP. It carries out the reaction a ribonucleoside 5'-diphosphate + ATP = a ribonucleoside 5'-triphosphate + ADP. Functionally, major role in the synthesis of nucleoside triphosphates other than ATP. The ATP gamma phosphate is transferred to the NDP beta phosphate via a ping-pong mechanism, using a phosphorylated active-site intermediate. The polypeptide is Nucleoside diphosphate kinase (Idiomarina loihiensis (strain ATCC BAA-735 / DSM 15497 / L2-TR)).